Here is a 489-residue protein sequence, read N- to C-terminus: tRNA(Ile)-lysidine synthase (489 aa).

35 to 40 (SGGLDS) lines the ATP pocket.

The protein belongs to the tRNA(Ile)-lysidine synthase family.

The protein localises to the cytoplasm. It carries out the reaction cytidine(34) in tRNA(Ile2) + L-lysine + ATP = lysidine(34) in tRNA(Ile2) + AMP + diphosphate + H(+). In terms of biological role, ligates lysine onto the cytidine present at position 34 of the AUA codon-specific tRNA(Ile) that contains the anticodon CAU, in an ATP-dependent manner. Cytidine is converted to lysidine, thus changing the amino acid specificity of the tRNA from methionine to isoleucine. In Burkholderia mallei (strain ATCC 23344), this protein is tRNA(Ile)-lysidine synthase.